The following is a 447-amino-acid chain: Tubulin beta-1 chain (447 aa).

Positions 11, 69, 138, 142, 143, 144, 204, and 226 each coordinate GTP. Residue Glu-69 participates in Mg(2+) binding. Positions 424–447 (QYQDATAEEEGEGDEEEAEGEAAA) are disordered. Acidic residues predominate over residues 429 to 447 (TAEEEGEGDEEEAEGEAAA).

This sequence belongs to the tubulin family. Dimer of alpha and beta chains. A typical microtubule is a hollow water-filled tube with an outer diameter of 25 nm and an inner diameter of 15 nM. Alpha-beta heterodimers associate head-to-tail to form protofilaments running lengthwise along the microtubule wall with the beta-tubulin subunit facing the microtubule plus end conferring a structural polarity. Microtubules usually have 13 protofilaments but different protofilament numbers can be found in some organisms and specialized cells. Requires Mg(2+) as cofactor.

The protein resides in the cytoplasm. Its subcellular location is the cytoskeleton. Tubulin is the major constituent of microtubules, a cylinder consisting of laterally associated linear protofilaments composed of alpha- and beta-tubulin heterodimers. Microtubules grow by the addition of GTP-tubulin dimers to the microtubule end, where a stabilizing cap forms. Below the cap, tubulin dimers are in GDP-bound state, owing to GTPase activity of alpha-tubulin. The chain is Tubulin beta-1 chain (TUBB1) from Cyanophora paradoxa.